A 166-amino-acid chain; its full sequence is Phosphopantetheine adenylyltransferase (166 aa).

Substrate is bound at residue Thr-9. ATP is bound by residues 9 to 10 (TF) and His-17. Substrate is bound by residues Lys-41, Leu-78, and Arg-92. ATP contacts are provided by residues 93–95 (GLR), Glu-103, and 128–134 (HQAIASK).

This sequence belongs to the bacterial CoaD family. As to quaternary structure, homohexamer. Mg(2+) is required as a cofactor.

It is found in the cytoplasm. It carries out the reaction (R)-4'-phosphopantetheine + ATP + H(+) = 3'-dephospho-CoA + diphosphate. It functions in the pathway cofactor biosynthesis; coenzyme A biosynthesis; CoA from (R)-pantothenate: step 4/5. Reversibly transfers an adenylyl group from ATP to 4'-phosphopantetheine, yielding dephospho-CoA (dPCoA) and pyrophosphate. The protein is Phosphopantetheine adenylyltransferase of Roseobacter denitrificans (strain ATCC 33942 / OCh 114) (Erythrobacter sp. (strain OCh 114)).